The sequence spans 300 residues: L-arabinolactonase (300 aa).

Residues Glu-22, Asn-156, and Asp-205 each coordinate a divalent metal cation.

The protein belongs to the SMP-30/CGR1 family. Requires a divalent metal cation as cofactor.

It carries out the reaction L-arabinono-1,4-lactone + H2O = L-arabinonate + H(+). In terms of biological role, catalyzes the cleavage of L-arabino-gamma-lactone to L-arabonate. Is involved in a degradation pathway of L-arabinose that allows A.brasilense to grow on L-arabinose as a sole carbon source. Can also use D-galactono-1,4-lactone as substrate in vitro; however, the enzyme is probably not involved in the metabolism of D-galactose in vivo. This is L-arabinolactonase (araB) from Azospirillum brasilense.